The chain runs to 111 residues: Ribosome-binding factor A (111 aa).

It belongs to the RbfA family. Monomer. Binds 30S ribosomal subunits, but not 50S ribosomal subunits or 70S ribosomes.

It localises to the cytoplasm. One of several proteins that assist in the late maturation steps of the functional core of the 30S ribosomal subunit. Associates with free 30S ribosomal subunits (but not with 30S subunits that are part of 70S ribosomes or polysomes). Required for efficient processing of 16S rRNA. May interact with the 5'-terminal helix region of 16S rRNA. The sequence is that of Ribosome-binding factor A from Helicobacter pylori (strain HPAG1).